Here is a 296-residue protein sequence, read N- to C-terminus: Non-selective voltage-gated ion channel VDAC2 (296 aa).

K25 is a binding site for ATP. K25 participates in a covalent cross-link: Glycyl lysine isopeptide (Lys-Gly) (interchain with G-Cter in ubiquitin). Residue S26 is modified to Phosphoserine. K33 serves as a coordination point for ATP. An N6-acetyllysine; alternate modification is found at K33. Position 33 is an N6-succinyllysine; alternate (K33). K33 participates in a covalent cross-link: Glycyl lysine isopeptide (Lys-Gly) (interchain with G-Cter in ubiquitin); alternate. The next 2 membrane-spanning stretches (beta stranded) occupy residues 39–48 and 52–60; these read LVKLDVKTKS and VEFTTSGSS. Glycyl lysine isopeptide (Lys-Gly) (interchain with G-Cter in ubiquitin) cross-links involve residues K66 and K74. Residues 67–77 traverse the membrane as a beta stranded segment; the sequence is VNGSLETKYKW. At Y80 the chain carries Phosphotyrosine. 3 beta stranded membrane-spanning segments follow: residues 82 to 89, 93 to 102, and 108 to 117; these read LTFTEKWN, TLGTEIAIED, and LKLTFDTTFS. T120 carries the phosphothreonine modification. N6-acetyllysine; alternate is present on K122. A Glycyl lysine isopeptide (Lys-Gly) (interchain with G-Cter in ubiquitin); alternate cross-link involves residue K122. K123 is covalently cross-linked (Glycyl lysine isopeptide (Lys-Gly) (interchain with G-Cter in ubiquitin)). Beta stranded transmembrane passes span 124–133, 136–143, 150–158, and 163–171; these read SGKIKSAYKR, LNLGCDVD, AIHGSAVFG, and LAGYQMTFD. Residue K174 forms a Glycyl lysine isopeptide (Lys-Gly) (interchain with G-Cter in ubiquitin) linkage. 6 beta stranded membrane-spanning segments follow: residues 176–188, 191–198, 202–211, 215–224, 231–240, and 244–251; these read KLTR…GYKT, FQLHTNVN, EFGGSIYQKV, LETAVNLAWT, RFGIAAKYKL, and ASISAKVN. At S206 the chain carries Phosphoserine. S253 carries the phosphoserine modification. Residues 255-257 and 273-277 contribute to the NAD(+) site; these read LVG and SALID. 2 beta stranded membrane passes run 255–264 and 267–276; these read LVGVGYTQTL and GVKLTLSALI. K279 bears the N6-acetyllysine; alternate mark. K279 is covalently cross-linked (Glycyl lysine isopeptide (Lys-Gly) (interchain with G-Cter in ubiquitin); alternate). The chain crosses the membrane as a beta stranded span at residues 286 to 295; it reads HKLGLGLELE. Residue K287 forms a Glycyl lysine isopeptide (Lys-Gly) (interchain with G-Cter in ubiquitin) linkage.

This sequence belongs to the eukaryotic mitochondrial porin family. As to quaternary structure, monomer, homodimer and higher order oligomers; formation of higher order structures is necessary for scramblase activity. Ubiquitinated by PRKN during mitophagy, leading to its degradation and enhancement of mitophagy. Deubiquitinated by USP30.

Its subcellular location is the mitochondrion outer membrane. It is found in the membrane. It catalyses the reaction chloride(in) = chloride(out). It carries out the reaction K(+)(in) = K(+)(out). The catalysed reaction is a 1,2-diacyl-sn-glycero-3-phospho-L-serine(in) = a 1,2-diacyl-sn-glycero-3-phospho-L-serine(out). The enzyme catalyses a 1,2-diacyl-sn-glycero-3-phosphocholine(in) = a 1,2-diacyl-sn-glycero-3-phosphocholine(out). It catalyses the reaction a 1,2-diacyl-sn-glycero-3-phospho-(1D-myo-inositol)(in) = a 1,2-diacyl-sn-glycero-3-phospho-(1D-myo-inositol)(out). In terms of biological role, non-selective voltage-gated ion channel that mediates the transport of anions and cations through the mitochondrion outer membrane and plasma membrane. The channel adopts an open conformation at zero mV and a closed conformation at both positive and negative potentials. There are two populations of channels; the main that functions in a lower open-state conductance with lower ion selectivity, that switch, in a voltage-dependent manner, from the open to a low-conducting 'closed' state and the other that has a normal ion selectivity in the typical high conductance, 'open' state. Binds various lipids, including the sphingolipid ceramide, the phospholipid phosphatidylcholine, and the sterols cholesterol and oxysterol. Binding of ceramide promotes the mitochondrial outer membrane permeabilization (MOMP) apoptotic pathway. Its function is as follows. Catalyzes the scrambling of phospholipids across the outer mitochondrial membrane; the mechanism is unrelated to channel activity and is capable of translocating both anionic and zwitterionic phospholipids. In Meleagris gallopavo (Wild turkey), this protein is Non-selective voltage-gated ion channel VDAC2.